The sequence spans 376 residues: Cytochrome b (376 aa).

Helical transmembrane passes span 28–48 (YGFL…FLAS), 72–94 (WCFR…LHIL), 107–127 (SWIS…VGYV), and 169–189 (FFVL…IHIF). Residues His78 and His92 each coordinate heme b. His173 and His187 together coordinate heme b. His192 is a binding site for a ubiquinone. 4 consecutive transmembrane segments (helical) span residues 214 to 234 (LLSL…IQSL), 274 to 294 (VPSK…LFLL), 317 to 337 (VPII…CQLP), and 340 to 360 (IFIL…LFVL).

It belongs to the cytochrome b family. The main subunits of complex b-c1 are: cytochrome b, cytochrome c1 and the Rieske protein. Heme b serves as cofactor.

The protein localises to the mitochondrion inner membrane. Component of the ubiquinol-cytochrome c reductase complex (complex III or cytochrome b-c1 complex) that is part of the mitochondrial respiratory chain. The b-c1 complex mediates electron transfer from ubiquinol to cytochrome c. Contributes to the generation of a proton gradient across the mitochondrial membrane that is then used for ATP synthesis. The sequence is that of Cytochrome b (MT-CYB) from Plasmodium falciparum.